A 336-amino-acid chain; its full sequence is 3-isopropylmalate dehydrogenase (336 aa).

Positions 87, 97, 121, and 211 each coordinate substrate. Mg(2+) contacts are provided by D211, D235, and D239. NAD(+) is bound at residue 271–283; that stretch reads GSAPDIAGQGVAD.

Belongs to the isocitrate and isopropylmalate dehydrogenases family. LeuB type 2 subfamily. As to quaternary structure, homodimer. It depends on Mg(2+) as a cofactor. Mn(2+) serves as cofactor.

Its subcellular location is the cytoplasm. The enzyme catalyses (2R,3S)-3-isopropylmalate + NAD(+) = 4-methyl-2-oxopentanoate + CO2 + NADH. Its pathway is amino-acid biosynthesis; L-leucine biosynthesis; L-leucine from 3-methyl-2-oxobutanoate: step 3/4. Functionally, catalyzes the oxidation of 3-carboxy-2-hydroxy-4-methylpentanoate (3-isopropylmalate) to 3-carboxy-4-methyl-2-oxopentanoate. The product decarboxylates to 4-methyl-2 oxopentanoate. This chain is 3-isopropylmalate dehydrogenase, found in Mycobacterium avium (strain 104).